A 147-amino-acid polypeptide reads, in one-letter code: MVHLTPEEKAAVAALWGKVNVDEVGGEALGRLLVVYPWTQRFFESFGDLSTPAAVMGNPKVKAHGKKVLGAFSDGLAHLDNLKGTFAQLSELHCDKLHVDPENFRLLGNVLVCVLARNFGKEFTPQVQAAFQKVVAGVATALAHKYH.

Residues 3 to 147 (HLTPEEKAAV…VATALAHKYH (145 aa)) form the Globin domain. Positions 64 and 93 each coordinate heme b.

This sequence belongs to the globin family. In terms of assembly, heterotetramer of two delta chains and two alpha chains. Red blood cells.

The protein is Hemoglobin subunit delta (HBD) of Ateles geoffroyi (Black-handed spider monkey).